Consider the following 565-residue polypeptide: Carboxylesterase 1D (565 aa).

A signal peptide spans 1–18 (MGLYPLIWLSLAACTAWG). N79 is a glycosylation site (N-linked (GlcNAc...) asparagine). C87 and C116 are disulfide-bonded. The Acyl-ester intermediate role is filled by S221. A disulfide bond links C273 and C284. Residue E353 is the Charge relay system of the active site. The residue at position 382 (K382) is an N6-succinyllysine. H466 serves as the catalytic Charge relay system. N-linked (GlcNAc...) asparagine glycosylation is present at N489. The short motif at 562-565 (HVEL) is the Prevents secretion from ER element.

This sequence belongs to the type-B carboxylesterase/lipase family. Homotrimer. As to expression, highest expression occurs in liver with lower levels in adipose tissue, kidney, heart, intestine, lung, testis and thymus.

The protein localises to the endoplasmic reticulum lumen. It is found in the cytoplasm. It localises to the cytosol. Its subcellular location is the lipid droplet. The protein resides in the microsome. It carries out the reaction a carboxylic ester + H2O = an alcohol + a carboxylate + H(+). The catalysed reaction is a long-chain fatty acyl ethyl ester + H2O = a long-chain fatty acid + ethanol + H(+). The enzyme catalyses all-trans-retinyl hexadecanoate + H2O = all-trans-retinol + hexadecanoate + H(+). In terms of biological role, major lipase in white adipose tissue. Involved in the metabolism of xenobiotics and of natural substrates. Hydrolyzes triacylglycerols and monoacylglycerols, with a preference for monoacylglycerols. The susceptibility of the substrate increases with decreasing acyl chain length of the fatty acid moiety. Catalyzes the synthesis of fatty acid ethyl esters. Hydrolyzes retinyl esters. In Mus musculus (Mouse), this protein is Carboxylesterase 1D.